Consider the following 979-residue polypeptide: MTIMNEGKKRSHSSSSDDHLAKRQYVEHGNECIMADEDIDTAIFEDGIKNNMQWQDTISKVVKAVVSIHFAQVAPFDCDPALVSEATGFVVDSELGIILTNRHVVGAGPFVGYVVFDNHEECDVIPIYRDPVHDFGFLKFDPKKIKYTKIHALELKPSLAKVGSEIRVVGNDAGEKLSILAGFISRIDRNAPDYGELTYNDFNTEYIQAAASASGGSSGSPVVNVDGYAVALQAGGSTEASTDFFLPLDRILRALKCIQADQPITRGTIQTQWLLKPYDECKRLGLTPEHESTSRALFPDRIGLLVAETILREGPSDGKIKEGDILIAINGQRISTFIQVDDILDSNVGNNVEFTVQRGGTDINVTCTIGDLHAITPSKYVEVCGATFNELSYQMARFYALPIRGVFLSSASGSFNFDNKEKIGWIVDSVNYQDTPNLDAFVEVMKTIPDKSRVTVRYHHLTDQHSPNVTSIYIDRHWCSEFRIYERNDKTGIWDYTNVADPISEEPLKPHTAKFIPIPSTNPEIAKLSSSLCMVHTVAAIPIDSLSAETLKTSGLIIDAEQGYVIVSRRAVPHDCLDVFVTIADSIVIPATIEFLHPMQNYAIVKYDPNLVKAPVVTPKLSNRRMKRGESAQFIGYTHNNRLITSETSVTDISSVSIPSNLIPRYRATNLEAISIDSNISPRCNFGIMTDQDGTVRALWLSFLGERQENKEKVYLMGLDIMDCKNVINILKSGKKPQVHIIDAGFGSISILHARIRGVPEEWIQKMEAESNNRLQFITVSRVSYTEETVKLQTGDVILSVNDKLVTEMDQLSGIVHASDENIDSHVLHFKVVRDGKIVDLDMKTVQVDETDQIVIFAGCILQKPHHAVRQAMSDIPKGVYCTFRGESSPAIQYGISATNFITHVNEIPTPDLDKFLEVVRQIPDNTYCKIRMMTFDNVPFAISLKTNYHYFPTAELKKNKDTGKWIEKEYNNSQEIPK.

The segment at 1 to 20 is disordered; that stretch reads MTIMNEGKKRSHSSSSDDHL. The interval 65–255 is serine protease; the sequence is VVSIHFAQVA…LPLDRILRAL (191 aa). Active-site charge relay system residues include H103, D134, and S217. PDZ domains follow at residues 273–361 and 750–836; these read WLLK…RGGT and SILH…VRDG.

It belongs to the peptidase S1C family.

The protein resides in the nucleus. In terms of biological role, nuclear serine protease which mediates apoptosis. The sequence is that of Pro-apoptotic serine protease NMA111 (NMA111) from Candida glabrata (strain ATCC 2001 / BCRC 20586 / JCM 3761 / NBRC 0622 / NRRL Y-65 / CBS 138) (Yeast).